A 545-amino-acid polypeptide reads, in one-letter code: Glucose-6-phosphate isomerase (545 aa).

Catalysis depends on Glu351, which acts as the Proton donor. Catalysis depends on residues His382 and Lys510.

The protein belongs to the GPI family.

Its subcellular location is the cytoplasm. It catalyses the reaction alpha-D-glucose 6-phosphate = beta-D-fructose 6-phosphate. The protein operates within carbohydrate biosynthesis; gluconeogenesis. Its pathway is carbohydrate degradation; glycolysis; D-glyceraldehyde 3-phosphate and glycerone phosphate from D-glucose: step 2/4. Functionally, catalyzes the reversible isomerization of glucose-6-phosphate to fructose-6-phosphate. The polypeptide is Glucose-6-phosphate isomerase (Shewanella amazonensis (strain ATCC BAA-1098 / SB2B)).